The primary structure comprises 103 residues: Small ribosomal subunit protein uS10 (103 aa).

Belongs to the universal ribosomal protein uS10 family. As to quaternary structure, part of the 30S ribosomal subunit.

Involved in the binding of tRNA to the ribosomes. This is Small ribosomal subunit protein uS10 from Shewanella halifaxensis (strain HAW-EB4).